Reading from the N-terminus, the 60-residue chain is Large ribosomal subunit protein bL32 (60 aa).

A compositionally biased stretch (basic residues) spans Met1–Arg16. The interval Met1 to Ala60 is disordered. Residues Val28–Leu44 show a composition bias toward basic and acidic residues.

Belongs to the bacterial ribosomal protein bL32 family.

In Chelativorans sp. (strain BNC1), this protein is Large ribosomal subunit protein bL32.